A 216-amino-acid polypeptide reads, in one-letter code: GTP-binding nuclear protein Ran, testis-specific isoform (216 aa).

Position 2 is an N-acetylalanine (Ala2). A Small GTPase Ran-type domain is found at 7–171 (PQIQFKLVLV…FWLARKLIGD (165 aa)). Residue 17-24 (GDGGTGKT) coordinates GTP. Position 24 is a phosphothreonine (Thr24). The segment at 37-45 (KEYVATLGV) is switch-I. At Lys60 the chain carries N6-acetyllysine. 65-69 (DTAGQ) contributes to the GTP binding site. Residues 68–84 (GQEKFGGLRDGYYIQAQ) form a switch-II region. Residue Lys71 is modified to N6-acetyllysine; alternate. Lys71 is covalently cross-linked (Glycyl lysine isopeptide (Lys-Gly) (interchain with G-Cter in SUMO2); alternate). A Glycyl lysine isopeptide (Lys-Gly) (interchain with G-Cter in ubiquitin); alternate cross-link involves residue Lys71. Lys99 bears the N6-acetyllysine mark. 122–125 (NKVD) is a GTP binding site. At Lys134 the chain carries N6-acetyllysine. Residue Lys152 forms a Glycyl lysine isopeptide (Lys-Gly) (interchain with G-Cter in SUMO2) linkage. Position 159 is an N6-acetyllysine; alternate (Lys159). An N6-succinyllysine; alternate modification is found at Lys159.

This sequence belongs to the small GTPase superfamily. Ran family. As to expression, testis specific.

It localises to the nucleus. It carries out the reaction GTP + H2O = GDP + phosphate + H(+). In terms of biological role, GTP-binding protein involved in nucleocytoplasmic transport. Required for the import of protein into the nucleus and also for RNA export. Involved in chromatin condensation and control of cell cycle. The protein is GTP-binding nuclear protein Ran, testis-specific isoform (Rasl2-9) of Rattus norvegicus (Rat).